A 348-amino-acid chain; its full sequence is UDP-N-acetyl-alpha-D-glucosaminouronate 4-epimerase (348 aa).

NAD(+) contacts are provided by F26, I27, D46, T50, G51, D77, I78, Q97, Y165, K169, and V195. Y165 functions as the Proton acceptor in the catalytic mechanism.

This sequence belongs to the NAD(P)-dependent epimerase/dehydratase family. As to quaternary structure, homodimer. Requires NAD(+) as cofactor.

The enzyme catalyses UDP-2-acetamido-2-deoxy-alpha-D-glucuronate = UDP-2-acetamido-2-deoxy-alpha-D-galacturonate. It carries out the reaction UDP-N-acetyl-alpha-D-glucosamine = UDP-N-acetyl-alpha-D-galactosamine. It functions in the pathway capsule biogenesis; capsule polysaccharide biosynthesis. It participates in glycan metabolism; Vi-antigen biosynthesis. Its function is as follows. Epimerase required for the biosynthesis of the capsular polysaccharide, commonly referred as the Vi antigen, an important virulence factor. Catalyzes the reversible epimerization of UDP-N-acetylglucosaminuronic acid (UDP-GlcNAcA) to UDP-N-acetylgalactosaminuronic acid (UDP-GalNAcA). Also catalyzes, with lower efficiency, the reversible epimerization of UDP-N-acetylglucosamine (UDP-GlcNAc) to UDP-N-acetylgalactosamine (UDP-GalNAc). Cannot use UDP-glucose (UDP-Glc) and UDP-galactose (UDP-Gal) as substrates. This Salmonella typhi protein is UDP-N-acetyl-alpha-D-glucosaminouronate 4-epimerase.